The following is a 171-amino-acid chain: Protein BTG1 (171 aa).

A Phosphoserine modification is found at Ser-159.

This sequence belongs to the BTG family. In terms of assembly, interacts with CNOT7 and CNOT8.

In terms of biological role, anti-proliferative protein. This chain is Protein BTG1 (Btg1), found in Rattus norvegicus (Rat).